Consider the following 101-residue polypeptide: Small ribosomal subunit protein uS10 (101 aa).

The protein belongs to the universal ribosomal protein uS10 family. In terms of assembly, part of the 30S ribosomal subunit.

Involved in the binding of tRNA to the ribosomes. The chain is Small ribosomal subunit protein uS10 from Porphyromonas gingivalis (strain ATCC 33277 / DSM 20709 / CIP 103683 / JCM 12257 / NCTC 11834 / 2561).